Consider the following 603-residue polypeptide: Glutamyl-tRNA(Gln) amidotransferase subunit B, mitochondrial (603 aa).

Disordered regions lie at residues 38-61 (RGRDWSSTSRRAIDTQTSGASNGA) and 72-91 (EQAREGRAATRKGEVSPPEH). The span at 42-58 (WSSTSRRAIDTQTSGAS) shows a compositional bias: polar residues.

This sequence belongs to the GatB/GatE family. GatB subfamily. As to quaternary structure, subunit of the heterotrimeric GatCAB amidotransferase (AdT) complex, composed of A, B and C subunits.

It is found in the mitochondrion. It carries out the reaction L-glutamyl-tRNA(Gln) + L-glutamine + ATP + H2O = L-glutaminyl-tRNA(Gln) + L-glutamate + ADP + phosphate + H(+). Functionally, allows the formation of correctly charged Gln-tRNA(Gln) through the transamidation of misacylated Glu-tRNA(Gln) in the mitochondria. The reaction takes place in the presence of glutamine and ATP through an activated gamma-phospho-Glu-tRNA(Gln). The protein is Glutamyl-tRNA(Gln) amidotransferase subunit B, mitochondrial of Paracoccidioides brasiliensis (strain Pb18).